The following is a 424-amino-acid chain: CinA-like protein (424 aa).

Belongs to the CinA family.

This chain is CinA-like protein, found in Prochlorococcus marinus (strain AS9601).